Reading from the N-terminus, the 102-residue chain is NADH-quinone oxidoreductase subunit K 1 (102 aa).

The next 3 membrane-spanning stretches (helical) occupy residues 5-25 (LSHY…GIFL), 31-51 (IVIL…MVAF), and 65-85 (LFIL…LVVF).

Belongs to the complex I subunit 4L family. As to quaternary structure, NDH-1 is composed of 14 different subunits. Subunits NuoA, H, J, K, L, M, N constitute the membrane sector of the complex.

Its subcellular location is the cell inner membrane. It carries out the reaction a quinone + NADH + 5 H(+)(in) = a quinol + NAD(+) + 4 H(+)(out). NDH-1 shuttles electrons from NADH, via FMN and iron-sulfur (Fe-S) centers, to quinones in the respiratory chain. The immediate electron acceptor for the enzyme in this species is believed to be ubiquinone. Couples the redox reaction to proton translocation (for every two electrons transferred, four hydrogen ions are translocated across the cytoplasmic membrane), and thus conserves the redox energy in a proton gradient. In Rhizobium etli (strain CIAT 652), this protein is NADH-quinone oxidoreductase subunit K 1.